An 87-amino-acid polypeptide reads, in one-letter code: UPF0512 protein B (87 aa).

It belongs to the UPF0512 family.

The chain is UPF0512 protein B from Dictyostelium discoideum (Social amoeba).